A 54-amino-acid chain; its full sequence is Large ribosomal subunit protein bL33B (54 aa).

The protein belongs to the bacterial ribosomal protein bL33 family.

This is Large ribosomal subunit protein bL33B from Saccharopolyspora erythraea (strain ATCC 11635 / DSM 40517 / JCM 4748 / NBRC 13426 / NCIMB 8594 / NRRL 2338).